The sequence spans 157 residues: Globin (157 aa).

G1 is subject to N-acetylglycine. The Globin domain occupies 8 to 155 (SLSADQKAAI…MANIIDAEQK (148 aa)). Residues H70 and H102 each coordinate heme b.

It belongs to the globin family. In terms of assembly, monomer.

This is Globin from Nerita albicilla (Ox-palate nerite).